A 422-amino-acid chain; its full sequence is Probable alpha-1,6-mannosyltransferase MNN11 (422 aa).

Topologically, residues 1-31 are cytoplasmic; sequence MAIKPRTKGKTYSSRSVGSQWFNRLGFKQNK. A helical; Signal-anchor for type II membrane protein membrane pass occupies residues 32–52; that stretch reads YGTCKFLSIITAFVFILYFFS. Residues 53–422 are Lumenal-facing; sequence NRFYPISRSA…GHMYQKIKKS (370 aa).

This sequence belongs to the glycosyltransferase 34 family. Component of the M-Pol II complex composed of ANP1, MNN9, MNN10, MNN11 and HOC1.

The protein resides in the golgi apparatus. It is found in the cis-Golgi network membrane. Required for synthesis of full-length mannan chains. Functionally, the M-Pol II complex possesses alpha-1,6-mannosyltransferase activity and is probably involved in the elongation of the mannan backbone of N-linked glycans on cell wall and periplasmic proteins. The sequence is that of Probable alpha-1,6-mannosyltransferase MNN11 (MNN11) from Saccharomyces cerevisiae (strain ATCC 204508 / S288c) (Baker's yeast).